Reading from the N-terminus, the 229-residue chain is 7-cyano-7-deazaguanine synthase (229 aa).

9–19 is an ATP binding site; that stretch reads LSGGLDSATVL. Residues Cys-188, Cys-198, Cys-201, and Cys-204 each coordinate Zn(2+).

It belongs to the QueC family. It depends on Zn(2+) as a cofactor.

The enzyme catalyses 7-carboxy-7-deazaguanine + NH4(+) + ATP = 7-cyano-7-deazaguanine + ADP + phosphate + H2O + H(+). It participates in purine metabolism; 7-cyano-7-deazaguanine biosynthesis. Functionally, catalyzes the ATP-dependent conversion of 7-carboxy-7-deazaguanine (CDG) to 7-cyano-7-deazaguanine (preQ(0)). The polypeptide is 7-cyano-7-deazaguanine synthase (Methylobacillus flagellatus (strain ATCC 51484 / DSM 6875 / VKM B-1610 / KT)).